Here is a 365-residue protein sequence, read N- to C-terminus: Gibberellin 20 oxidase 1-A (365 aa).

The 101-residue stretch at 199–299 (GNDSIMRLNY…RKSLAFFLCP (101 aa)) folds into the Fe2OG dioxygenase domain. Residues His-224, Asp-226, and His-280 each coordinate Fe cation. Residue Arg-290 is part of the active site.

It belongs to the iron/ascorbate-dependent oxidoreductase family. GA20OX subfamily. It depends on Fe cation as a cofactor. L-ascorbate serves as cofactor. In terms of tissue distribution, expressed in nodes and the ear of the elongating stem.

It carries out the reaction gibberellin A12 + 2 2-oxoglutarate + 3 O2 + H(+) = gibberellin A9 + 2 succinate + 3 CO2 + 2 H2O. It catalyses the reaction gibberellin A53 + 2 2-oxoglutarate + 3 O2 + H(+) = gibberellin A20 + 2 succinate + 3 CO2 + 2 H2O. Functionally, key oxidase enzyme in the biosynthesis of gibberellin that catalyzes the conversion of GA12 and GA53 to GA9 and GA20 respectively, via a three-step oxidation at C-20 of the GA skeleton. The protein is Gibberellin 20 oxidase 1-A (GA20ox1A) of Triticum aestivum (Wheat).